Here is a 292-residue protein sequence, read N- to C-terminus: Bifunctional protein FolD (292 aa).

Residues 161–163 (GRS) and I231 contribute to the NADP(+) site.

The protein belongs to the tetrahydrofolate dehydrogenase/cyclohydrolase family. As to quaternary structure, homodimer.

It catalyses the reaction (6R)-5,10-methylene-5,6,7,8-tetrahydrofolate + NADP(+) = (6R)-5,10-methenyltetrahydrofolate + NADPH. The catalysed reaction is (6R)-5,10-methenyltetrahydrofolate + H2O = (6R)-10-formyltetrahydrofolate + H(+). Its pathway is one-carbon metabolism; tetrahydrofolate interconversion. Catalyzes the oxidation of 5,10-methylenetetrahydrofolate to 5,10-methenyltetrahydrofolate and then the hydrolysis of 5,10-methenyltetrahydrofolate to 10-formyltetrahydrofolate. The polypeptide is Bifunctional protein FolD (Protochlamydia amoebophila (strain UWE25)).